The chain runs to 459 residues: Argininosuccinate lyase (459 aa).

It belongs to the lyase 1 family. Argininosuccinate lyase subfamily.

The protein localises to the cytoplasm. It catalyses the reaction 2-(N(omega)-L-arginino)succinate = fumarate + L-arginine. It functions in the pathway amino-acid biosynthesis; L-arginine biosynthesis; L-arginine from L-ornithine and carbamoyl phosphate: step 3/3. The sequence is that of Argininosuccinate lyase from Lactococcus lactis subsp. cremoris (strain SK11).